Here is a 296-residue protein sequence, read N- to C-terminus: Cobalamin trafficking protein CblD (296 aa).

Residues 1–38 (MAHVLCNRARLVSYLPGFCSLVKRVINPRAFSTAGSSG) constitute a mitochondrion transit peptide. Position 203 is an N6-acetyllysine (Lys-203).

Heterodimer with MMACHC. Forms a multiprotein complex with MMACHC, MTR and MTRR.

The protein resides in the cytoplasm. It localises to the mitochondrion. Involved in cobalamin metabolism and trafficking. Plays a role in regulating the biosynthesis and the proportion of two coenzymes, methylcob(III)alamin (MeCbl) and 5'-deoxyadenosylcobalamin (AdoCbl). Promotes oxidation of cob(II)alamin bound to MMACHC. The processing of cobalamin in the cytosol occurs in a multiprotein complex composed of at least MMACHC, MMADHC, MTRR (methionine synthase reductase) and MTR (methionine synthase) which may contribute to shuttle safely and efficiently cobalamin towards MTR in order to produce methionine. The sequence is that of Cobalamin trafficking protein CblD from Mus musculus (Mouse).